The sequence spans 166 residues: Myosin regulatory light chain 2, ventricular/cardiac muscle isoform (166 aa).

Position 2 is a n,N,N-trimethylserine (Ser2). The residue at position 14 (Asn14) is a Deamidated asparagine. Ser19 is subject to Phosphoserine. 3 EF-hand domains span residues 24-59 (TQIQ…LGRV), 94-129 (DPEE…QAER), and 130-165 (FSKE…GEEK). Asp37, Asn39, Asp41, and Asp48 together coordinate Ca(2+). Thr52 is modified (phosphothreonine).

Myosin is a hexamer of 2 heavy chains and 4 light chains. Interacts with MYOC. In terms of processing, N-terminus is methylated by METTL11A/NTM1. Phosphorylated by MYLK3 and MYLK2; promotes cardiac muscle contraction and function. Dephosphorylated by PPP1CB complexed to PPP1R12B. The phosphorylated form in adult is expressed as gradients across the heart from endocardium (low phosphorylation) to epicardium (high phosphorylation); regulates cardiac torsion and workload distribution.

Its subcellular location is the cytoplasm. The protein localises to the myofibril. It localises to the sarcomere. The protein resides in the a band. Functionally, contractile protein that plays a role in heart development and function. Following phosphorylation, plays a role in cross-bridge cycling kinetics and cardiac muscle contraction by increasing myosin lever arm stiffness and promoting myosin head diffusion; as a consequence of the increase in maximum contraction force and calcium sensitivity of contraction force. These events altogether slow down myosin kinetics and prolong duty cycle resulting in accumulated myosins being cooperatively recruited to actin binding sites to sustain thin filament activation as a means to fine-tune myofilament calcium sensitivity to force. During cardiogenesis plays an early role in cardiac contractility by promoting cardiac myofibril assembly. This is Myosin regulatory light chain 2, ventricular/cardiac muscle isoform from Bos taurus (Bovine).